The chain runs to 167 residues: Ribosome maturation factor RimM (167 aa).

A PRC barrel domain is found at 93–165; it reads KGVYYDFQLI…QVIIDPIPGL (73 aa).

This sequence belongs to the RimM family. In terms of assembly, binds ribosomal protein uS19.

It is found in the cytoplasm. In terms of biological role, an accessory protein needed during the final step in the assembly of 30S ribosomal subunit, possibly for assembly of the head region. Essential for efficient processing of 16S rRNA. May be needed both before and after RbfA during the maturation of 16S rRNA. It has affinity for free ribosomal 30S subunits but not for 70S ribosomes. The polypeptide is Ribosome maturation factor RimM (Dehalococcoides mccartyi (strain ATCC BAA-2266 / KCTC 15142 / 195) (Dehalococcoides ethenogenes (strain 195))).